Consider the following 1149-residue polypeptide: cGMP-specific 3',5'-cyclic phosphodiesterase (1149 aa).

Composition is skewed to low complexity over residues Met-1 to Ser-19 and Ala-31 to Ser-47. Residues Met-1 to Asp-175 are disordered. Residues Lys-48–Ile-59 show a composition bias toward polar residues. Residues Ser-60–Gly-85 are compositionally biased toward low complexity. Positions Gln-96–Ser-108 are enriched in polar residues. The span at Ser-132–Gln-158 shows a compositional bias: low complexity. GAF domains are found at residues Asp-278–Ile-430 and Asn-462–Ile-643. Positions Ser-673–Val-996 constitute a PDEase domain. His-749 serves as the catalytic Proton donor. A divalent metal cation is bound by residues His-753, His-789, Asp-790, and Asp-900. Disordered regions lie at residues Gln-1037–Leu-1066 and Ser-1096–Leu-1149. Composition is skewed to basic and acidic residues over residues Gly-1042–Arg-1053 and Ser-1096–Ser-1106. Positions Ala-1115 to Met-1135 are enriched in low complexity. A compositionally biased stretch (basic residues) spans Ser-1139–Leu-1149. The residue at position 1146 (Cys-1146) is a Cysteine methyl ester. A lipid anchor (S-farnesyl cysteine) is attached at Cys-1146. Residues Ala-1147–Leu-1149 constitute a propeptide, removed in mature form.

It belongs to the cyclic nucleotide phosphodiesterase family. In terms of assembly, interacts with PrBP. Requires a divalent metal cation as cofactor.

The protein resides in the cell membrane. The catalysed reaction is 3',5'-cyclic GMP + H2O = GMP + H(+). Its function is as follows. Has a role regulating cGMP transport in Malpighian tubule principal cells. This Drosophila yakuba (Fruit fly) protein is cGMP-specific 3',5'-cyclic phosphodiesterase.